The chain runs to 844 residues: Beta-mannosidase B (844 aa).

Glutamate 432 (proton donor) is an active-site residue. An N-linked (GlcNAc...) asparagine glycan is attached at asparagine 723.

This sequence belongs to the glycosyl hydrolase 2 family. Beta-mannosidase B subfamily.

It carries out the reaction Hydrolysis of terminal, non-reducing beta-D-mannose residues in beta-D-mannosides.. It functions in the pathway glycan metabolism; N-glycan degradation. Exoglycosidase that cleaves the single beta-linked mannose residue from the non-reducing end of beta-mannosidic oligosaccharides of various complexity and length. Prefers mannobiose over mannotriose and has no activity against polymeric mannan. Is also severely restricted by galactosyl substitutions at the +1 subsite. This is Beta-mannosidase B (mndB) from Aspergillus niger (strain ATCC MYA-4892 / CBS 513.88 / FGSC A1513).